The following is a 491-amino-acid chain: NADH-ubiquinone oxidoreductase chain 2 (491 aa).

14 consecutive transmembrane segments (helical) span residues 11 to 31 (MIKY…SISI), 38 to 58 (VHII…VIGI), 74 to 94 (ELIK…IKMF), 106 to 126 (ITDE…ISME), 129 to 149 (NLIT…ILAL), 161 to 181 (LKYY…IVSI), 210 to 230 (IALI…HGWL), 238 to 258 (GMLM…MVLI), 270 to 290 (AIMF…VGTI), 298 to 318 (LIRF…LMLA), 330 to 350 (VYYL…IMGF), 375 to 395 (GAIV…MTNF), 411 to 433 (VYLT…NLVK), and 463 to 483 (IVLG…ILNV).

It belongs to the complex I subunit 2 family.

The protein resides in the mitochondrion inner membrane. It catalyses the reaction a ubiquinone + NADH + 5 H(+)(in) = a ubiquinol + NAD(+) + 4 H(+)(out). Its function is as follows. Core subunit of the mitochondrial membrane respiratory chain NADH dehydrogenase (Complex I) that is believed to belong to the minimal assembly required for catalysis. Complex I functions in the transfer of electrons from NADH to the respiratory chain. The immediate electron acceptor for the enzyme is believed to be ubiquinone. This is NADH-ubiquinone oxidoreductase chain 2 (nad2) from Dictyostelium citrinum (Slime mold).